We begin with the raw amino-acid sequence, 961 residues long: Zinc finger protein basonuclin-1 (961 aa).

The interval 210–219 is hydrophobic; the sequence is MTFMLPFQFF. 2 C2H2-type zinc fingers span residues 325 to 348 and 353 to 382; these read VFCT…NAVH and HKCT…PRLH. The interval 370-393 is disordered; sequence RNRHSANPNPRLHMPMNRNNRDKD. The short motif at 501–507 is the Nuclear localization signal element; it reads PKKKSRK. Phosphoserine is present on residues Ser-505 and Ser-509. The tract at residues 523-572 is disordered; it reads EEKRHSLSSDDEVPLQVVSEDEPEDSSPRSDRVPEEQHTQLSLEEPLPQG. Acidic residues predominate over residues 531 to 547; it reads SDDEVPLQVVSEDEPED. Basic and acidic residues predominate over residues 548–560; the sequence is SSPRSDRVPEEQH. C2H2-type zinc fingers lie at residues 687-711 and 715-743; these read FQCD…NTHA and HACT…SLHQ. The segment at 810–864 is disordered; that stretch reads ESYNSGPPSEGTILDLSTTSSMKSESSSHSSWDSDGVSEEGTALMEDSDGNCEGQ. The span at 826–844 shows a compositional bias: low complexity; that stretch reads STTSSMKSESSSHSSWDSD. 2 consecutive C2H2-type zinc fingers follow at residues 895-918 and 923-950; these read ITCH…KTVH and HKCK…PNLH. The tract at residues 937-961 is disordered; the sequence is VRSRNRHSQNPNLHKSLASSPSHLQ.

In terms of assembly, interacts with HSF2BP (via C-terminus). In terms of processing, phosphorylation on Ser-505 and Ser-509 leads to cytoplasmic localization. In terms of tissue distribution, epidermis and germ cells of testis and ovary.

The protein localises to the nucleus. Its subcellular location is the cytoplasm. The protein resides in the nucleoplasm. In terms of biological role, transcriptional activator. It is likely involved in the regulation of keratinocytes terminal differentiation in squamous epithelia and hair follicles. Required for the maintenance of spermatogenesis. It is involved in the positive regulation of oocyte maturation, probably acting through the control of BMP15 levels and regulation of AKT signaling cascade. May also play a role in the early development of embryos. The polypeptide is Zinc finger protein basonuclin-1 (Bnc1) (Mus musculus (Mouse)).